A 157-amino-acid chain; its full sequence is Alpha-amylase/trypsin inhibitor RA16 (157 aa).

An N-terminal signal peptide occupies residues 1–26; the sequence is MASNKVVISALLVVVVSVLAATTTMA. 5 cysteine pairs are disulfide-bonded: Cys41-Cys89, Cys55-Cys77, Cys63-Cys121, Cys78-Cys137, and Cys91-Cys149.

Belongs to the cereal trypsin/alpha-amylase inhibitor family. In terms of processing, five disulfide bonds are present.

The protein localises to the secreted. In terms of biological role, seed storage protein. This chain is Alpha-amylase/trypsin inhibitor RA16, found in Oryza sativa subsp. japonica (Rice).